Here is a 347-residue protein sequence, read N- to C-terminus: Phenylalanine--tRNA ligase alpha subunit (347 aa).

E261 contacts Mg(2+).

This sequence belongs to the class-II aminoacyl-tRNA synthetase family. Phe-tRNA synthetase alpha subunit type 1 subfamily. As to quaternary structure, tetramer of two alpha and two beta subunits. Mg(2+) is required as a cofactor.

Its subcellular location is the cytoplasm. The enzyme catalyses tRNA(Phe) + L-phenylalanine + ATP = L-phenylalanyl-tRNA(Phe) + AMP + diphosphate + H(+). In Streptococcus pyogenes serotype M1, this protein is Phenylalanine--tRNA ligase alpha subunit.